The primary structure comprises 201 residues: Small ribosomal subunit protein uS4 (201 aa).

The region spanning 92-155 (ARLDNVVFRL…KSLEVIANSL (64 aa)) is the S4 RNA-binding domain.

Belongs to the universal ribosomal protein uS4 family. As to quaternary structure, part of the 30S ribosomal subunit. Contacts protein S5. The interaction surface between S4 and S5 is involved in control of translational fidelity.

One of the primary rRNA binding proteins, it binds directly to 16S rRNA where it nucleates assembly of the body of the 30S subunit. Functionally, with S5 and S12 plays an important role in translational accuracy. This Phocaeicola vulgatus (strain ATCC 8482 / DSM 1447 / JCM 5826 / CCUG 4940 / NBRC 14291 / NCTC 11154) (Bacteroides vulgatus) protein is Small ribosomal subunit protein uS4.